The sequence spans 420 residues: Glucose-1-phosphate adenylyltransferase (420 aa).

Residues tyrosine 107, glycine 172, 187 to 188 (EK), and serine 205 each bind alpha-D-glucose 1-phosphate.

It belongs to the bacterial/plant glucose-1-phosphate adenylyltransferase family. Homotetramer.

The enzyme catalyses alpha-D-glucose 1-phosphate + ATP + H(+) = ADP-alpha-D-glucose + diphosphate. The protein operates within glycan biosynthesis; glycogen biosynthesis. Involved in the biosynthesis of ADP-glucose, a building block required for the elongation reactions to produce glycogen. Catalyzes the reaction between ATP and alpha-D-glucose 1-phosphate (G1P) to produce pyrophosphate and ADP-Glc. The protein is Glucose-1-phosphate adenylyltransferase of Rhizobium leguminosarum bv. trifolii (strain WSM2304).